A 267-amino-acid polypeptide reads, in one-letter code: Ribosyldihydronicotinamide dehydrogenase-like protein traD (267 aa).

FAD-binding positions include His9, 15-16 (LN), and 100-103 (LWWF). Substrate is bound at residue 122-124 (GHG). FAD contacts are provided by residues 152-155 (TLGG) and Tyr160.

This sequence belongs to the NAD(P)H dehydrogenase (quinone) family. Homodimer. It depends on FAD as a cofactor.

The protein operates within secondary metabolite biosynthesis. Its function is as follows. Ribosyldihydronicotinamide dehydrogenase-like protein; part of the tra gene cluster that produces terrestric acid. The clavatol biosynthesis cluster cla and the terrestric acid cluster tra are both involved in the production of peniphenones and penilactones. The non-reducing PKS claF is responsible for the formation of clavatol from successive condensations of 3 malonyl-CoA units, presumably with a simple acetyl-CoA starter unit, and 2 methylation steps. The esterase claE probably collaborates with claF by catalyzing the hydrolysis of ACP-bound acyl intermediates to free the ACP from stalled intermediates. The clavatol oxidase claD then converts clavatol to hydroxyclavatol. Spontaneous dehydration of hydroxyclavatol leads to the accumulation of the highly active ortho-quinone methide. On the other hand, the PKS-NRPS hybrid traA is involved in the formation of crustosic acid, with the help of traB and traD. The polyketide synthase module (PKS) of traA is responsible for the synthesis of the polyketide backbone via the condensation of an acetyl-CoA starter unit with 3 malonyl-CoA units. The downstream nonribosomal peptide synthetase (NRPS) module then amidates the carboxyl end of the polyketide with L-malic acid. Because traA lacks a designated enoylreductase (ER) domain, the required activity is provided the enoyl reductase traG. Crustosic acid undergoes decarboxylation and isomerization to the terrestric acid, catalyzed by the 2-oxoglutarate-dependent dioxygenase traH. Both acids are further converted to the 2 gamma-butyrolactones (R)-5-methyltetronic acid and (S)-5-carboxylmethyltetronic acid, with involvement of the cytochrome P450 monooxygenase claJ. Spontaneous addition of the methide to these gamma-butyrolactones leads to peniphenone D and penilactone D, which undergo again stereospecific attacking by methide to give penilactones A and B. The chain is Ribosyldihydronicotinamide dehydrogenase-like protein traD from Penicillium crustosum (Blue mold fungus).